An 80-amino-acid chain; its full sequence is Large ribosomal subunit protein uL24 (80 aa).

This sequence belongs to the universal ribosomal protein uL24 family. As to quaternary structure, part of the 50S ribosomal subunit.

In terms of biological role, one of two assembly initiator proteins, it binds directly to the 5'-end of the 23S rRNA, where it nucleates assembly of the 50S subunit. Functionally, one of the proteins that surrounds the polypeptide exit tunnel on the outside of the subunit. This Chlorobaculum parvum (strain DSM 263 / NCIMB 8327) (Chlorobium vibrioforme subsp. thiosulfatophilum) protein is Large ribosomal subunit protein uL24.